The chain runs to 194 residues: Factor in the germline alpha (194 aa).

The region spanning 59–111 (ERRRVANAKERERIKNLNRGFAKLKALVPFLPQSRKPSKVDILKGATEYIQIL) is the bHLH domain. Over residues 121-137 (SEKQSPEEQTHSGRPSD) the composition is skewed to basic and acidic residues. A disordered region spans residues 121 to 163 (SEKQSPEEQTHSGRPSDPHVSSTRELLGNATQPTSCASGLKKE). Residues 139-157 (HVSSTRELLGNATQPTSCA) are compositionally biased toward polar residues.

In terms of assembly, heterodimer with TCF3/isoform E12. As to expression, expressed only in the oocytes within the ovary and at lower level in the testis. Found in the resting oocytes of the primordial follicle cells, at the periphery of the ovary and in the hilar region. Also detected in growing oocytes, but at lower levels.

The protein resides in the nucleus. Its function is as follows. Germ-line specific transcription factor implicated in postnatal oocyte-specific gene expression. Plays a key regulatory role in the expression of multiple oocyte-specific genes, including those that initiate folliculogenesis and those that encode the zona pellucida (ZP1, ZP2 and ZP3) required for fertilization and early embryonic survival. Essential for oocytes to survive and form primordial follicles. The persistence of FIGLA in adult females suggests that it may regulate additional pathways that are essential for normal ovarian development. Binds to the E-box (5'-CANNTG-3') of the ZPs (ZP1, ZP2, ZP3) promoters. The chain is Factor in the germline alpha (Figla) from Mus musculus (Mouse).